Here is a 209-residue protein sequence, read N- to C-terminus: Thiamine-phosphate synthase (209 aa).

4-amino-2-methyl-5-(diphosphooxymethyl)pyrimidine is bound by residues 35 to 39 (QLRNK) and Asn-67. Positions 68 and 87 each coordinate Mg(2+). Ser-106 is a 4-amino-2-methyl-5-(diphosphooxymethyl)pyrimidine binding site. 2-[(2R,5Z)-2-carboxy-4-methylthiazol-5(2H)-ylidene]ethyl phosphate is bound at residue 132-134 (TGS). 4-amino-2-methyl-5-(diphosphooxymethyl)pyrimidine is bound at residue Lys-135. 2-[(2R,5Z)-2-carboxy-4-methylthiazol-5(2H)-ylidene]ethyl phosphate is bound by residues Gly-163 and 183 to 184 (IS).

It belongs to the thiamine-phosphate synthase family. Mg(2+) serves as cofactor.

It carries out the reaction 2-[(2R,5Z)-2-carboxy-4-methylthiazol-5(2H)-ylidene]ethyl phosphate + 4-amino-2-methyl-5-(diphosphooxymethyl)pyrimidine + 2 H(+) = thiamine phosphate + CO2 + diphosphate. The enzyme catalyses 2-(2-carboxy-4-methylthiazol-5-yl)ethyl phosphate + 4-amino-2-methyl-5-(diphosphooxymethyl)pyrimidine + 2 H(+) = thiamine phosphate + CO2 + diphosphate. The catalysed reaction is 4-methyl-5-(2-phosphooxyethyl)-thiazole + 4-amino-2-methyl-5-(diphosphooxymethyl)pyrimidine + H(+) = thiamine phosphate + diphosphate. It participates in cofactor biosynthesis; thiamine diphosphate biosynthesis; thiamine phosphate from 4-amino-2-methyl-5-diphosphomethylpyrimidine and 4-methyl-5-(2-phosphoethyl)-thiazole: step 1/1. Condenses 4-methyl-5-(beta-hydroxyethyl)thiazole monophosphate (THZ-P) and 2-methyl-4-amino-5-hydroxymethyl pyrimidine pyrophosphate (HMP-PP) to form thiamine monophosphate (TMP). The sequence is that of Thiamine-phosphate synthase from Chlorobium phaeovibrioides (strain DSM 265 / 1930) (Prosthecochloris vibrioformis (strain DSM 265)).